Here is a 126-residue protein sequence, read N- to C-terminus: MRHYEIVFMVHPDQSEQVAGMIERYTGSITEAGGTIHRLEDWGRRQMAYPINKLHKAHYVLMNVESEQAAIDELETAFRYNDAVLRNMIMRTKAAITEPSVMMKAKEERTAKREDAAPRAEEAAAE.

Residues 101–126 (VMMKAKEERTAKREDAAPRAEEAAAE) are disordered. Basic and acidic residues predominate over residues 104-126 (KAKEERTAKREDAAPRAEEAAAE).

It belongs to the bacterial ribosomal protein bS6 family.

Its function is as follows. Binds together with bS18 to 16S ribosomal RNA. The polypeptide is Small ribosomal subunit protein bS6 (Aliivibrio salmonicida (strain LFI1238) (Vibrio salmonicida (strain LFI1238))).